Reading from the N-terminus, the 610-residue chain is UvrABC system protein C (610 aa).

The GIY-YIG domain occupies S16–V94. Positions K203–V238 constitute a UVR domain.

The protein belongs to the UvrC family. In terms of assembly, interacts with UvrB in an incision complex.

It is found in the cytoplasm. Its function is as follows. The UvrABC repair system catalyzes the recognition and processing of DNA lesions. UvrC both incises the 5' and 3' sides of the lesion. The N-terminal half is responsible for the 3' incision and the C-terminal half is responsible for the 5' incision. The chain is UvrABC system protein C from Shewanella frigidimarina (strain NCIMB 400).